Consider the following 195-residue polypeptide: Holliday junction branch migration complex subunit RuvA (195 aa).

Positions 1 to 61 (MYEYFEGIIS…DTGITLYGFQ (61 aa)) are domain I. Residues 62-140 (DQDDKGLFLK…DYVARLDKPE (79 aa)) form a domain II region. The flexible linker stretch occupies residues 141–146 (NGEEIS). The domain III stretch occupies residues 146–195 (SPALNDALLALIALGYTQKEVDRITPKLVEIEADTADQYIKKGLALLLKK).

This sequence belongs to the RuvA family. In terms of assembly, homotetramer. Forms an RuvA(8)-RuvB(12)-Holliday junction (HJ) complex. HJ DNA is sandwiched between 2 RuvA tetramers; dsDNA enters through RuvA and exits via RuvB. An RuvB hexamer assembles on each DNA strand where it exits the tetramer. Each RuvB hexamer is contacted by two RuvA subunits (via domain III) on 2 adjacent RuvB subunits; this complex drives branch migration. In the full resolvosome a probable DNA-RuvA(4)-RuvB(12)-RuvC(2) complex forms which resolves the HJ.

It is found in the cytoplasm. In terms of biological role, the RuvA-RuvB-RuvC complex processes Holliday junction (HJ) DNA during genetic recombination and DNA repair, while the RuvA-RuvB complex plays an important role in the rescue of blocked DNA replication forks via replication fork reversal (RFR). RuvA specifically binds to HJ cruciform DNA, conferring on it an open structure. The RuvB hexamer acts as an ATP-dependent pump, pulling dsDNA into and through the RuvAB complex. HJ branch migration allows RuvC to scan DNA until it finds its consensus sequence, where it cleaves and resolves the cruciform DNA. The chain is Holliday junction branch migration complex subunit RuvA from Lactobacillus acidophilus (strain ATCC 700396 / NCK56 / N2 / NCFM).